A 234-amino-acid chain; its full sequence is MSPVPSVTAVQVENVLFPPSVKPPGSTNDLFLGGAGVRGLEIQGKFVKFTAIGVYLESSAVPTLAVKWKGKTVEELADSVDFFRDVVTGPFEKFTKVTTILPLTGRQYSDKVSENCVAFWKSVGIYTDAEAKAIEKFNEVLKDETFPPGNSILFTHSPLGALTMSFSKDGSLPEVGNAVIENKLLTEAVLESIIGKHGVSPEAKKSLAARLSELFCKEAGDEKIEAEKVAPVAC.

Residues Thr-50, Asn-115, and Ser-192 each coordinate substrate.

The protein belongs to the chalcone isomerase family.

It carries out the reaction a chalcone = a flavanone.. It participates in secondary metabolite biosynthesis; flavonoid biosynthesis. Functionally, catalyzes the intramolecular cyclization of bicyclic chalcones into tricyclic (S)-flavanones. Responsible for the isomerization of 4,2',4',6'-tetrahydroxychalcone (also termed chalcone) into naringenin. This is Chalcone--flavanone isomerase 2 (CHI2) from Vitis vinifera (Grape).